Reading from the N-terminus, the 246-residue chain is Probable transcriptional regulatory protein NT01CX_1819 (246 aa).

This sequence belongs to the TACO1 family.

The protein resides in the cytoplasm. This is Probable transcriptional regulatory protein NT01CX_1819 from Clostridium novyi (strain NT).